The following is a 368-amino-acid chain: Alkaline phosphatase L (368 aa).

Residues 1–23 (MFKRSLIAASLSVAALVSAQAMA) form the signal peptide.

This sequence belongs to the PstS family. In terms of assembly, homodimer.

The protein localises to the secreted. Its subcellular location is the periplasm. The enzyme catalyses a phosphate monoester + H2O = an alcohol + phosphate. Functionally, has both a phosphomonoesterase and phosphodiesterase activity. This Pseudomonas aeruginosa (strain ATCC 15692 / DSM 22644 / CIP 104116 / JCM 14847 / LMG 12228 / 1C / PRS 101 / PAO1) protein is Alkaline phosphatase L.